Consider the following 408-residue polypeptide: Adenylosuccinate synthetase (408 aa).

GTP-binding positions include 12 to 18 (GDEGKGK) and 40 to 42 (GHT). The active-site Proton acceptor is the Asp13. Residues Asp13 and Gly40 each coordinate Mg(2+). IMP contacts are provided by residues 13 to 16 (DEGK), 38 to 41 (NAGH), Thr121, Arg135, Gln213, Thr228, and Arg292. His41 acts as the Proton donor in catalysis. Substrate is bound at residue 288 to 294 (TTTGRPR). Residues Arg294, 320–322 (KLD), and 393–395 (STS) each bind GTP.

This sequence belongs to the adenylosuccinate synthetase family. Homodimer. It depends on Mg(2+) as a cofactor.

It is found in the cytoplasm. It carries out the reaction IMP + L-aspartate + GTP = N(6)-(1,2-dicarboxyethyl)-AMP + GDP + phosphate + 2 H(+). Its pathway is purine metabolism; AMP biosynthesis via de novo pathway; AMP from IMP: step 1/2. Plays an important role in the de novo pathway of purine nucleotide biosynthesis. Catalyzes the first committed step in the biosynthesis of AMP from IMP. The protein is Adenylosuccinate synthetase of Thermus thermophilus (strain ATCC BAA-163 / DSM 7039 / HB27).